The sequence spans 302 residues: Cuticle collagen 40 (302 aa).

Disordered stretches follow at residues 79-103 and 119-302; these read RIKR…GGGG and AGAP…APGY. Positions 91-103 are enriched in gly residues; the sequence is YAEGGAAAGGGGG. Triple-helical region regions lie at residues 114–143, 162–185, 189–221, 226–252, and 255–290; these read GAAG…AGSD, GPAG…DGNT, GGEG…PGQV, GTPG…AGAS, and GPAG…GGGC. The segment covering 137–154 has biased composition (low complexity); it reads PGTAGSDAEAAAAPTASD. Pro residues predominate over residues 194–203; sequence AGPPGPPGPA. Low complexity-rich tracts occupy residues 205–234 and 245–281; these read NPGT…AGAA and NPGS…PGEA. Residues 293 to 302 are compositionally biased toward pro residues; it reads CPPPRTAPGY.

The protein belongs to the cuticular collagen family. As to quaternary structure, collagen polypeptide chains are complexed within the cuticle by disulfide bonds and other types of covalent cross-links.

Functionally, nematode cuticles are composed largely of collagen-like proteins. The cuticle functions both as an exoskeleton and as a barrier to protect the worm from its environment. The polypeptide is Cuticle collagen 40 (col-40) (Caenorhabditis elegans).